We begin with the raw amino-acid sequence, 389 residues long: Nicotinamide-nucleotide adenylyltransferase (389 aa).

Positions 380-383 match the Nuclear localization signal motif; the sequence is KKQK.

The protein belongs to the eukaryotic NMN adenylyltransferase family. Abundantly expressed in neuronal and muscle cells. Present at relatively low levels at the neuromuscular junction. Expressed in the eye; present in photoreceptor cells and various neurons in the lamina cortex and medulla cortex and at low levels in the lamina.

The protein resides in the nucleus. It is found in the cytoplasm. Its subcellular location is the presynaptic active zone. The enzyme catalyses beta-nicotinamide D-ribonucleotide + ATP + H(+) = diphosphate + NAD(+). It carries out the reaction nicotinate beta-D-ribonucleotide + ATP + H(+) = deamido-NAD(+) + diphosphate. Its pathway is cofactor biosynthesis; NAD(+) biosynthesis; NAD(+) from nicotinamide D-ribonucleotide: step 1/1. It functions in the pathway cofactor biosynthesis; NAD(+) biosynthesis; deamido-NAD(+) from nicotinate D-ribonucleotide: step 1/1. In terms of biological role, catalyzes the formation of NAD(+) from nicotinamide mononucleotide (NMN) and ATP. Essential for viability. Stress-response chaperone protein that prevents toxic aggregation of proteins and promotes proteasome-mediated degradation of misfolded proteins; this is independent of its NAD(+) synthesis activity. Neuroprotective in response to toxic protein aggregation, for example by overexpressed Atx-1/ataxin-1. Required for maintenance and integrity of mature neurons, protecting them from neuronal activity-induced neurodegeneration. Required for the maintenance of axonal and dendritic integrity in both central and peripheral neurons. Chaperone function and neuroprotective roles are largely independent of NAD(+) synthesis activity. Catalyzes the formation of NAD(+) from nicotinamide mononucleotide (NMN) and ATP. Has, or stimulates, chaperone holdase activity but not refoldase activity. Does not have neuroprotective properties and may stimulate apoptosis and neurodegeneration in response to toxic protein aggregates. Functionally, catalyzes the formation of NAD(+) from nicotinamide mononucleotide (NMN) and ATP. Has, or stimulates, chaperone holdase and refoldase activity. Neuroprotective and reduces the toxic load of protein aggregates, preventing apoptosis and neurodegeneration. Promotes clearance of nuclear misfolded protein aggregates. The protein is Nicotinamide-nucleotide adenylyltransferase of Drosophila melanogaster (Fruit fly).